Here is a 208-residue protein sequence, read N- to C-terminus: MTGGSVLKDRDRLGRIAVFVACLLPLVWYGARFVGGDLGANPIEAFTRKLGEWGLIFLLASLAATPARLLWGWTFPLRRRRMVGLFAFFYVCLHLLSYIGLDQFFDWGAIWADIVKRTYITVGMAALLLLVPLAVTSTRGMVRRLGGKRWIALHRLVYPAAVLGVLHYMLMVKADLSEPLIFAGILGLLLAVRLVPAVRRRRSGRAPS.

Helical transmembrane passes span 16-36 (IAVF…FVGG), 53-73 (WGLI…LWGW), 82-102 (MVGL…IGLD), 118-138 (TYIT…VTST), 156-176 (LVYP…KADL), and 178-198 (EPLI…VPAV).

The protein belongs to the MsrQ family. In terms of assembly, heterodimer of a catalytic subunit (MsrP) and a heme-binding subunit (MsrQ). FMN serves as cofactor. Requires heme b as cofactor.

The protein localises to the cell inner membrane. Functionally, part of the MsrPQ system that repairs oxidized periplasmic proteins containing methionine sulfoxide residues (Met-O), using respiratory chain electrons. Thus protects these proteins from oxidative-stress damage caused by reactive species of oxygen and chlorine generated by the host defense mechanisms. MsrPQ is essential for the maintenance of envelope integrity under bleach stress, rescuing a wide series of structurally unrelated periplasmic proteins from methionine oxidation. MsrQ provides electrons for reduction to the reductase catalytic subunit MsrP, using the quinone pool of the respiratory chain. The polypeptide is Protein-methionine-sulfoxide reductase heme-binding subunit MsrQ (Rhodospirillum rubrum (strain ATCC 11170 / ATH 1.1.1 / DSM 467 / LMG 4362 / NCIMB 8255 / S1)).